Consider the following 90-residue polypeptide: Phosphoribosyl-ATP pyrophosphatase (90 aa).

It belongs to the PRA-PH family.

It localises to the cytoplasm. The enzyme catalyses 1-(5-phospho-beta-D-ribosyl)-ATP + H2O = 1-(5-phospho-beta-D-ribosyl)-5'-AMP + diphosphate + H(+). Its pathway is amino-acid biosynthesis; L-histidine biosynthesis; L-histidine from 5-phospho-alpha-D-ribose 1-diphosphate: step 2/9. This Streptomyces avermitilis (strain ATCC 31267 / DSM 46492 / JCM 5070 / NBRC 14893 / NCIMB 12804 / NRRL 8165 / MA-4680) protein is Phosphoribosyl-ATP pyrophosphatase.